The sequence spans 214 residues: Small ribosomal subunit protein eS6 (214 aa).

It belongs to the eukaryotic ribosomal protein eS6 family.

In Saccharolobus solfataricus (strain ATCC 35092 / DSM 1617 / JCM 11322 / P2) (Sulfolobus solfataricus), this protein is Small ribosomal subunit protein eS6.